A 224-amino-acid chain; its full sequence is Putative O-methyltransferase MT1258 (224 aa).

The segment covering 1 to 10 (MDGTPGHDDM) has biased composition (basic and acidic residues). The interval 1–21 (MDGTPGHDDMPGQPAPSRGES) is disordered. Residues Val51, Glu73, 75–76 (GT), Ser81, Asp99, and Ile100 contribute to the S-adenosyl-L-methionine site. Residue Asp147 coordinates substrate. An S-adenosyl-L-methionine-binding site is contributed by Asp149.

The protein belongs to the class I-like SAM-binding methyltransferase superfamily. Cation-dependent O-methyltransferase family.

This is Putative O-methyltransferase MT1258 from Mycobacterium tuberculosis (strain CDC 1551 / Oshkosh).